A 371-amino-acid polypeptide reads, in one-letter code: Glyco-Gag protein (371 aa).

Residues 1–51 (MSGASSGTAIGAHLFGVSPEYRVLIGDEGAGPSKSLSEVSFSVWYRSRAAR) are Cytoplasmic-facing. The chain crosses the membrane as a helical span at residues 52-72 (LVILCLVASFLVPCLTFLIAE). Over 73-371 (AVMGQTVTTP…NVIDETFPLT (299 aa)) the chain is Extracellular. Asn134 is a glycosylation site (N-linked (GlcNAc...) asparagine; by host). 2 disordered regions span residues 171–281 (VRPF…NNRP) and 350–371 (VPGE…FPLT). Over residues 174–193 (FLPPPKPPTPLPQPLSPQPS) the composition is skewed to pro residues. The segment covering 194–203 (APLTSSLYPV) has biased composition (low complexity). 2 stretches are compositionally biased toward pro residues: residues 204 to 220 (VPKP…PDPS) and 230 to 245 (EPPP…PSGP).

Post-translationally, glycosylated by host. In terms of processing, cleaved by host near the middle of the molecule, releasing the c-terminal half containing capsid and nucleoprotein domains op GAG.

The protein resides in the host cell membrane. Plays a role in viral particle release. Presumably acts by facilitating the fission of the virion bud at the cell surface. This is Glyco-Gag protein from Feline sarcoma virus (strain Snyder-Theilen).